Here is a 247-residue protein sequence, read N- to C-terminus: 2,3-bisphosphoglycerate-dependent phosphoglycerate mutase (247 aa).

Residues 8–15 (RHGESTWN), 21–22 (TG), R60, 87–90 (ERHY), K98, 114–115 (RR), and 183–184 (GN) contribute to the substrate site. H9 acts as the Tele-phosphohistidine intermediate in catalysis. Residue E87 is the Proton donor/acceptor of the active site.

This sequence belongs to the phosphoglycerate mutase family. BPG-dependent PGAM subfamily. In terms of assembly, homodimer.

The catalysed reaction is (2R)-2-phosphoglycerate = (2R)-3-phosphoglycerate. It participates in carbohydrate degradation; glycolysis; pyruvate from D-glyceraldehyde 3-phosphate: step 3/5. In terms of biological role, catalyzes the interconversion of 2-phosphoglycerate and 3-phosphoglycerate. This chain is 2,3-bisphosphoglycerate-dependent phosphoglycerate mutase, found in Leptothrix cholodnii (strain ATCC 51168 / LMG 8142 / SP-6) (Leptothrix discophora (strain SP-6)).